Reading from the N-terminus, the 410-residue chain is Cytochrome P450(BM-1) (410 aa).

Residue Cys-356 participates in heme binding.

This sequence belongs to the cytochrome P450 family. Heme serves as cofactor.

It localises to the cytoplasm. In terms of biological role, cytochromes P450 are a group of heme-thiolate monooxygenases. They oxidize a variety of structurally unrelated compounds, including steroids, fatty acids, and xenobiotics. This Priestia megaterium (strain ATCC 14581 / DSM 32 / CCUG 1817 / JCM 2506 / NBRC 15308 / NCIMB 9376 / NCTC 10342 / NRRL B-14308 / VKM B-512 / Ford 19) (Bacillus megaterium) protein is Cytochrome P450(BM-1) (cyp106).